Consider the following 411-residue polypeptide: LL-diaminopimelate aminotransferase (411 aa).

2 residues coordinate substrate: tyrosine 16 and glycine 43. Residues tyrosine 73, 109–110, tyrosine 133, asparagine 188, tyrosine 219, and 247–249 each bind pyridoxal 5'-phosphate; these read AK and SFS. Residues lysine 110, tyrosine 133, and asparagine 188 each coordinate substrate. Lysine 250 carries the N6-(pyridoxal phosphate)lysine modification. Positions 258 and 293 each coordinate pyridoxal 5'-phosphate. Residues asparagine 293 and arginine 389 each coordinate substrate.

The protein belongs to the class-I pyridoxal-phosphate-dependent aminotransferase family. LL-diaminopimelate aminotransferase subfamily. In terms of assembly, homodimer. Pyridoxal 5'-phosphate serves as cofactor.

It catalyses the reaction (2S,6S)-2,6-diaminopimelate + 2-oxoglutarate = (S)-2,3,4,5-tetrahydrodipicolinate + L-glutamate + H2O + H(+). Its pathway is amino-acid biosynthesis; L-lysine biosynthesis via DAP pathway; LL-2,6-diaminopimelate from (S)-tetrahydrodipicolinate (aminotransferase route): step 1/1. Involved in the synthesis of meso-diaminopimelate (m-DAP or DL-DAP), required for both lysine and peptidoglycan biosynthesis. Catalyzes the direct conversion of tetrahydrodipicolinate to LL-diaminopimelate. In Methanobrevibacter smithii (strain ATCC 35061 / DSM 861 / OCM 144 / PS), this protein is LL-diaminopimelate aminotransferase.